The primary structure comprises 385 residues: Putative ESX-1 scaffolding and assembly protein SaeC (385 aa).

The protein localises to the cytoplasm. Functionally, may be involved in assembly of the ESX-1 / type VII specialized secretion system (T7SS), which exports several proteins including EsxA and EsxB. Involved in DNA conjugation in recipient (MKD8) strain. The polypeptide is Putative ESX-1 scaffolding and assembly protein SaeC (Mycolicibacterium smegmatis (strain ATCC 700084 / mc(2)155) (Mycobacterium smegmatis)).